The chain runs to 500 residues: Phosphatidylserine decarboxylase proenzyme 1, mitochondrial (500 aa).

A mitochondrion; not cleaved when targeted to the endoplasmic reticulum-targeting transit peptide spans 1-48; sequence MSIMPVKNALAQGRTLLMGRMPAVKFSTRMQLRNRTAVLWNRKFSTRL. N-linked (GlcNAc...) asparagine glycosylation occurs at Asn34. The Mitochondrial matrix segment spans residues 45–79; it reads STRLFVQQRRSSGEIVDRAKAAAANSGRKQVSMKW. The interval 57 to 101 is enables targeting to the endoplasmic reticulum in addition to mitochondria; sequence GEIVDRAKAAAANSGRKQVSMKWVVLTSFTIVLGTILLVSRNDST. Residues 80–98 traverse the membrane as a helical segment; sequence VVLTSFTIVLGTILLVSRN. The Mitochondrial intermembrane portion of the chain corresponds to 99 to 500; it reads DSTEEDATEG…LGIIGKNDLK (402 aa). Residues Asp210, His348, and Ser463 each act as charge relay system; for autoendoproteolytic cleavage activity in the active site. The active-site Schiff-base intermediate with substrate; via pyruvic acid; for decarboxylase activity is Ser463. A Pyruvic acid (Ser); by autocatalysis modification is found at Ser463. A required for processing and stability region spans residues 475 to 492; it reads FKFDVRVGDKVKMGQKLG.

Belongs to the phosphatidylserine decarboxylase family. PSD-B subfamily. Eukaryotic type I sub-subfamily. As to quaternary structure, heterodimer of a large membrane-associated beta subunit and a small pyruvoyl-containing alpha subunit. Pyruvate serves as cofactor. Post-translationally, glycosylated at Asn-34 in the endoplasmic reticulum. In terms of processing, the precursor is imported via the TOM complex into mitochondria, where the N-terminal presequence is cleaved by the matrix-located proteases MPP (MAS1-MAS2) and OCT1. Is synthesized initially as an inactive proenzyme. Formation of the active enzyme involves a self-maturation process in which the active site pyruvoyl group is generated from an internal serine residue via an autocatalytic post-translational modification. Two non-identical subunits are generated from the proenzyme in this reaction, and the pyruvate is formed at the N-terminus of the alpha chain, which is derived from the carboxyl end of the proenzyme. The autoendoproteolytic cleavage occurs by a canonical serine protease mechanism, in which the side chain hydroxyl group of the serine supplies its oxygen atom to form the C-terminus of the beta chain, while the remainder of the serine residue undergoes an oxidative deamination to produce ammonia and the pyruvoyl prosthetic group on the alpha chain. During this reaction, the Ser that is part of the protease active site of the proenzyme becomes the pyruvoyl prosthetic group, which constitutes an essential element of the active site of the mature decarboxylase.

The protein localises to the mitochondrion inner membrane. The protein resides in the lipid droplet. It localises to the endoplasmic reticulum membrane. The enzyme catalyses a 1,2-diacyl-sn-glycero-3-phospho-L-serine + H(+) = a 1,2-diacyl-sn-glycero-3-phosphoethanolamine + CO2. It participates in phospholipid metabolism; phosphatidylethanolamine biosynthesis; phosphatidylethanolamine from CDP-diacylglycerol: step 2/2. Catalyzes the formation of phosphatidylethanolamine (PtdEtn) from phosphatidylserine (PtdSer). Plays a central role in phospholipid metabolism and in the interorganelle trafficking of phosphatidylserine. Phosphatidylethanolamine formed in the mitochondria is exported to other membranes to fullfill their requirements for PtdEtn. Required for normal mitochondrial morphology and proper mitochondrial fusion during yeast mating. Involved in lipid droplet biogenesis at the endoplasmic reticulum membrane. Required for induction of mitophagy during nitrogen starvation. Appears to play a specific role in supporting respiratory complex III activity. This is Phosphatidylserine decarboxylase proenzyme 1, mitochondrial from Saccharomyces cerevisiae (strain ATCC 204508 / S288c) (Baker's yeast).